A 487-amino-acid polypeptide reads, in one-letter code: Aspartyl/glutamyl-tRNA(Asn/Gln) amidotransferase subunit B (487 aa).

It belongs to the GatB/GatE family. GatB subfamily. In terms of assembly, heterotrimer of A, B and C subunits.

It carries out the reaction L-glutamyl-tRNA(Gln) + L-glutamine + ATP + H2O = L-glutaminyl-tRNA(Gln) + L-glutamate + ADP + phosphate + H(+). The enzyme catalyses L-aspartyl-tRNA(Asn) + L-glutamine + ATP + H2O = L-asparaginyl-tRNA(Asn) + L-glutamate + ADP + phosphate + 2 H(+). Allows the formation of correctly charged Asn-tRNA(Asn) or Gln-tRNA(Gln) through the transamidation of misacylated Asp-tRNA(Asn) or Glu-tRNA(Gln) in organisms which lack either or both of asparaginyl-tRNA or glutaminyl-tRNA synthetases. The reaction takes place in the presence of glutamine and ATP through an activated phospho-Asp-tRNA(Asn) or phospho-Glu-tRNA(Gln). This is Aspartyl/glutamyl-tRNA(Asn/Gln) amidotransferase subunit B from Roseiflexus sp. (strain RS-1).